A 376-amino-acid polypeptide reads, in one-letter code: Serpin B6 (376 aa).

Position 1 is an N-acetylmethionine (Met1). Position 151 is a phosphoserine (Ser151). Residue Lys195 is modified to N6-acetyllysine.

The protein belongs to the serpin family. Ov-serpin subfamily. In terms of assembly, forms a complex with the monomeric form of beta-tryptase.

The protein localises to the cytoplasm. Its function is as follows. Inhibitor of cathepsin G, kallikrein-8 and thrombin. May play an important role in the inner ear in the protection against leakage of lysosomal content during stress. May be involved in the regulation of serine proteinases present in the brain or extravasated from the blood. This chain is Serpin B6 (SERPINB6), found in Pongo abelii (Sumatran orangutan).